Reading from the N-terminus, the 36-residue chain is Photosystem I reaction center subunit VIII (36 aa).

Residues 8 to 28 form a helical membrane-spanning segment; it reads SVLVPLVGLVFPAIAMASLFL.

This sequence belongs to the PsaI family.

It is found in the plastid. Its subcellular location is the chloroplast thylakoid membrane. Its function is as follows. May help in the organization of the PsaL subunit. The polypeptide is Photosystem I reaction center subunit VIII (Helianthus annuus (Common sunflower)).